Consider the following 64-residue polypeptide: Putative H/ACA ribonucleoprotein complex subunit 3 (64 aa).

Belongs to the NOP10 family. In terms of assembly, component of the small nucleolar ribonucleoprotein particles containing H/ACA-type snoRNAs (H/ACA snoRNPs).

The protein localises to the nucleus. Its subcellular location is the nucleolus. Functionally, required for ribosome biogenesis. Part of a complex which catalyzes pseudouridylation of rRNA. This involves the isomerization of uridine such that the ribose is subsequently attached to C5, instead of the normal N1. Pseudouridine ('psi') residues may serve to stabilize the conformation of rRNAs. The protein is Putative H/ACA ribonucleoprotein complex subunit 3 (nola-3) of Caenorhabditis elegans.